A 533-amino-acid polypeptide reads, in one-letter code: Calcium/calmodulin-dependent protein kinase type II (533 aa).

ATP-binding positions include 18–26 (LGKGAFSVV) and K41. D134 serves as the catalytic Proton acceptor. Phosphothreonine; by autocatalysis is present on T284. Polar residues-rich tracts occupy residues 316 to 345 (TSDSTGSVASNGSTTHDTSQIAGTSSQPTS) and 377 to 391 (PPSTIKESSESSQTI). Disordered stretches follow at residues 316–347 (TSDSTGSVASNGSTTHDTSQIAGTSSQPTSPA) and 369–400 (LLNKKEQGPPSTIKESSESSQTIDDNDSEKAQ).

It belongs to the protein kinase superfamily. CAMK Ser/Thr protein kinase family. CaMK subfamily. As to quaternary structure, dodecamer. Subunits are tightly packed around a central ring-shaped scaffold with extensive contacts between the regulatory segment of one kinase and the catalytic domain of another enabling cooperative activation of a subunit by the adjacent molecule. Interacts with and phosphorylates daf-16; the interaction promotes daf-16 nuclear localization. Interacts with egl-2 and tir-1. Interacts with nsy-1. It depends on Mg(2+) as a cofactor.

It is found in the cytoplasm. The protein resides in the cell projection. Its subcellular location is the axon. The protein localises to the perikaryon. The catalysed reaction is L-seryl-[protein] + ATP = O-phospho-L-seryl-[protein] + ADP + H(+). The enzyme catalyses L-threonyl-[protein] + ATP = O-phospho-L-threonyl-[protein] + ADP + H(+). Its activity is regulated as follows. Ca(2+)/calmodulin binding removes an autoinhibitory regulatory segment located C-terminal to the kinase domain. This releases the catalytic activity of the enzyme and makes accessible a regulatory residue Thr-284. Phosphorylation of Thr-284 by another kinase domain within the oligomeric holoenzyme keeps CaMKII active in the absence of Ca(2+)/calmodulin by preventing the rebinding of the regulatory segment to the kinase domain and by increasing the affinity of calmodulin for the enzyme. Can respond to high-frequency Ca(2+) pulses to become Ca(2+) independent. Role in locomotion and neuronal cell fate specification. Required for the regulation of synaptic density, egg laying, defecation, and meiotic maturation. Required for viability under chronic osmotic stress in which it acts downstream of osr-1. Regulates the synaptic trafficking of glr-1. Bidirectional modulator of neurotransmitter release with negative modulatory effects mainly mediated via slo-1 activation. May suppress the functional response to an internal pacemaker, perhaps by modulating the activity of the IP3 receptor. The sequence is that of Calcium/calmodulin-dependent protein kinase type II from Caenorhabditis briggsae.